The following is a 258-amino-acid chain: Isoprenyl transferase (258 aa).

The active site involves aspartate 24. Aspartate 24 is a binding site for Mg(2+). Residues 25-28 (GNGR), tryptophan 29, arginine 37, histidine 41, and 69-71 (SSE) contribute to the substrate site. The active-site Proton acceptor is the asparagine 72. Residues tryptophan 73, arginine 75, arginine 190, and 196 to 198 (RIS) each bind substrate. Glutamate 209 serves as a coordination point for Mg(2+).

This sequence belongs to the UPP synthase family. Homodimer. Mg(2+) is required as a cofactor.

Its function is as follows. Catalyzes the condensation of isopentenyl diphosphate (IPP) with allylic pyrophosphates generating different type of terpenoids. This Ralstonia nicotianae (strain ATCC BAA-1114 / GMI1000) (Ralstonia solanacearum) protein is Isoprenyl transferase.